Consider the following 392-residue polypeptide: Retrovirus-related Pol polyprotein from type-1 retrotransposable element R1 4 (392 aa).

The 230-residue stretch at 1-230 folds into the Reverse transcriptase domain; the sequence is PFADDLAVLV…GGVVIRRRPE (230 aa). The nucleic acid-binding endonuclease stretch occupies residues 231–392; it reads GLKENYNRVL…DEGLSSESEE (162 aa).

It carries out the reaction DNA(n) + a 2'-deoxyribonucleoside 5'-triphosphate = DNA(n+1) + diphosphate. This is Retrovirus-related Pol polyprotein from type-1 retrotransposable element R1 4 from Nasonia vitripennis (Parasitic wasp).